Consider the following 191-residue polypeptide: dCTP deaminase, dUMP-forming (191 aa).

DCTP is bound by residues K101–R106, D119, T127–E129, Q148, Y162, and Q174. E129 acts as the Proton donor/acceptor in catalysis. The interval N169–I191 is disordered. Polar residues predominate over residues Y171–H183.

The protein belongs to the dCTP deaminase family. In terms of assembly, homotrimer.

It carries out the reaction dCTP + 2 H2O = dUMP + NH4(+) + diphosphate. It functions in the pathway pyrimidine metabolism; dUMP biosynthesis; dUMP from dCTP: step 1/1. In terms of biological role, bifunctional enzyme that catalyzes both the deamination of dCTP to dUTP and the hydrolysis of dUTP to dUMP without releasing the toxic dUTP intermediate. The chain is dCTP deaminase, dUMP-forming from Pseudarthrobacter chlorophenolicus (strain ATCC 700700 / DSM 12829 / CIP 107037 / JCM 12360 / KCTC 9906 / NCIMB 13794 / A6) (Arthrobacter chlorophenolicus).